A 150-amino-acid chain; its full sequence is Globin (150 aa).

The Globin domain occupies 11 to 150 (PLSAAEKTKI…MICILLRSAY (140 aa)). The heme b site is built by His-74 and His-106.

Belongs to the globin family. In terms of assembly, monomer.

The chain is Globin from Lampetra fluviatilis (European river lamprey).